Reading from the N-terminus, the 192-residue chain is Thymidine kinase (192 aa).

ATP contacts are provided by residues 9 to 16 (GAMNSGKS) and 85 to 88 (DEVQ). Glutamate 86 (proton acceptor) is an active-site residue. Residues cysteine 143, cysteine 146, cysteine 181, and cysteine 184 each coordinate Zn(2+).

Belongs to the thymidine kinase family. As to quaternary structure, homotetramer.

It localises to the cytoplasm. The catalysed reaction is thymidine + ATP = dTMP + ADP + H(+). This chain is Thymidine kinase, found in Shouchella clausii (strain KSM-K16) (Alkalihalobacillus clausii).